A 167-amino-acid chain; its full sequence is Endoribonuclease YbeY (167 aa).

Zn(2+) is bound by residues H131, H135, and H141.

Belongs to the endoribonuclease YbeY family. It depends on Zn(2+) as a cofactor.

The protein resides in the cytoplasm. Its function is as follows. Single strand-specific metallo-endoribonuclease involved in late-stage 70S ribosome quality control and in maturation of the 3' terminus of the 16S rRNA. This chain is Endoribonuclease YbeY, found in Rickettsia felis (strain ATCC VR-1525 / URRWXCal2) (Rickettsia azadi).